The following is a 348-amino-acid chain: Mannonate dehydratase (348 aa).

The protein belongs to the mannonate dehydratase family. It depends on Fe(2+) as a cofactor. Requires Mn(2+) as cofactor.

It catalyses the reaction D-mannonate = 2-dehydro-3-deoxy-D-gluconate + H2O. Its pathway is carbohydrate metabolism; pentose and glucuronate interconversion. Catalyzes the dehydration of D-mannonate. In Streptococcus agalactiae serotype V (strain ATCC BAA-611 / 2603 V/R), this protein is Mannonate dehydratase.